We begin with the raw amino-acid sequence, 401 residues long: Phosphoglycerate kinase, cytosolic (401 aa).

11 residues coordinate (2R)-3-phosphoglycerate: V24, D25, N27, R41, S63, H64, G66, R67, R122, H154, and R155. Position 200 (G200) interacts with ADP. G200 is a CDP binding site. AMP is bound by residues K202 and K206. Residue K206 participates in ATP binding. G224 is an ADP binding site. G224 provides a ligand contact to CDP. Residues G225 and G297 each contribute to the AMP site. The ATP site is built by G225 and G297. CDP contacts are provided by G322 and F327. An ADP-binding site is contributed by F327. E328 is an AMP binding site. ATP contacts are provided by E328, D359, and S360. Position 359 (D359) interacts with Mg(2+).

This sequence belongs to the phosphoglycerate kinase family. As to quaternary structure, monomer. The cofactor is Mg(2+).

The protein localises to the cytoplasm. It catalyses the reaction (2R)-3-phosphoglycerate + ATP = (2R)-3-phospho-glyceroyl phosphate + ADP. Its pathway is carbohydrate degradation; glycolysis; pyruvate from D-glyceraldehyde 3-phosphate: step 2/5. This Nicotiana tabacum (Common tobacco) protein is Phosphoglycerate kinase, cytosolic.